A 154-amino-acid polypeptide reads, in one-letter code: Deoxyuridine 5'-triphosphate nucleotidohydrolase (154 aa).

Residues 64 to 66 (RSG), Asn-77, 81 to 83 (TVD), and Lys-91 contribute to the substrate site.

Belongs to the dUTPase family. Homotrimer. It depends on Mg(2+) as a cofactor.

It carries out the reaction dUTP + H2O = dUMP + diphosphate + H(+). Its pathway is pyrimidine metabolism; dUMP biosynthesis; dUMP from dCTP (dUTP route): step 2/2. Functionally, this enzyme is involved in nucleotide metabolism: it produces dUMP, the immediate precursor of thymidine nucleotides and it decreases the intracellular concentration of dUTP so that uracil cannot be incorporated into DNA. The chain is Deoxyuridine 5'-triphosphate nucleotidohydrolase from Mycobacterium leprae (strain Br4923).